Consider the following 126-residue polypeptide: Aspartate 1-decarboxylase (126 aa).

Ser25 serves as the catalytic Schiff-base intermediate with substrate; via pyruvic acid. A Pyruvic acid (Ser) modification is found at Ser25. A substrate-binding site is contributed by Thr57. Tyr58 serves as the catalytic Proton donor. 73 to 75 (GAA) lines the substrate pocket.

It belongs to the PanD family. In terms of assembly, heterooctamer of four alpha and four beta subunits. The cofactor is pyruvate. Post-translationally, is synthesized initially as an inactive proenzyme, which is activated by self-cleavage at a specific serine bond to produce a beta-subunit with a hydroxyl group at its C-terminus and an alpha-subunit with a pyruvoyl group at its N-terminus.

It is found in the cytoplasm. The catalysed reaction is L-aspartate + H(+) = beta-alanine + CO2. Its pathway is cofactor biosynthesis; (R)-pantothenate biosynthesis; beta-alanine from L-aspartate: step 1/1. Functionally, catalyzes the pyruvoyl-dependent decarboxylation of aspartate to produce beta-alanine. The protein is Aspartate 1-decarboxylase of Yersinia pestis bv. Antiqua (strain Antiqua).